The primary structure comprises 150 residues: Propanediol utilization protein PduV (150 aa).

A targets protein to the BMC region spans residues 1-42 (MKRIMLIGPSQCGKTSLTQCMRGEALHYQKTQAIVWSPTTID). 8 to 15 (GPSQCGKT) lines the GTP pocket.

Belongs to the EutP/PduV family. In terms of assembly, interacts with PduU, probably via the PduU beta-barrel which is predicted by modeling to be on the exterior of the BMC.

The protein resides in the bacterial microcompartment. It functions in the pathway polyol metabolism; 1,2-propanediol degradation. In terms of biological role, may play a role in the spatial distribution of the bacterial microcompartment (BMC) dedicated to 1,2-PD degradation, perhaps being involved in cytoskeleton dynamics; might bind GTP. This subunit is directly targeted to the BMC. Functionally, expression of a cosmid containing the full 21-gene pdu operon in E.coli allows E.coli to grow on 1,2-propanediol (1,2-PD) with the appearance of bacterial microcompartments (BMC) in its cytoplasm. Its function is as follows. The 1,2-PD-specific bacterial microcompartment (BMC) concentrates low levels of 1,2-PD catabolic enzymes, concentrates volatile reaction intermediates thus enhancing pathway flux and keeps the level of toxic, mutagenic propionaldehyde low. In Citrobacter freundii, this protein is Propanediol utilization protein PduV.